The chain runs to 328 residues: MMSGEPLHVKTPIRDSMALSKMAGTSVYLKMDSAQPSGSFKIRGIGHFCKRWAKQGCAHFVCSSAGNAGMAAAYAARQLGVPATIVVPSTTPALTIERLKNEGATVKVVGELLDEAFELAKALAKNNPGWVYIPPFDDPLIWEGHASIVKELKETLWEKPGAIALSVGGGGLLCGVVQGLQEVGWGDVPVIAMETFGAHSFHAATTAGKLVSLPKITSVAKALGVKTVGAQALKLFQEHPIFSEVISDQEAVAAIEKFVDDEKILVEPACGAALAAVYSHVIQKLQLEGNLRTPLPSLVVIVCGGSNISLAQLRALKEQLGMTNRLPK.

At K41 the chain carries N6-(pyridoxal phosphate)lysine. P128 lines the pyridoxal 5'-phosphate pocket.

Belongs to the serine/threonine dehydratase family. Homodimer. Pyridoxal 5'-phosphate is required as a cofactor. Predominantly expressed in the perivenous regions of the liver.

It localises to the cytoplasm. It carries out the reaction L-serine = pyruvate + NH4(+). The enzyme catalyses L-threonine = 2-oxobutanoate + NH4(+). It functions in the pathway carbohydrate biosynthesis; gluconeogenesis. Functionally, catalyzes the pyridoxal-phosphate-dependent dehydrative deamination of L-threonine and L-serine to ammonia and alpha-ketobutyrate and pyruvate, respectively. This Homo sapiens (Human) protein is L-serine dehydratase/L-threonine deaminase (SDS).